Reading from the N-terminus, the 104-residue chain is Ig lambda-3 chain C region (104 aa).

Positions 6-99 (PTLTMFPPSP…EGDTVEKSLS (94 aa)) constitute an Ig-like domain. A disulfide bridge connects residues Cys-27 and Cys-85.

The polypeptide is Ig lambda-3 chain C region (Iglc3) (Mus musculus (Mouse)).